The following is a 228-amino-acid chain: Phosphatidate cytidylyltransferase (228 aa).

6 consecutive transmembrane segments (helical) span residues 31-51 (FVVAILWFKTLFYILMILVGL), 65-85 (IHYLLIGFIIIPIPISLLIFL), 93-113 (LVIMLYFCIIWSVDTFAMIGG), 131-151 (WTGLIIGTISAGLIAVLVSLI), 165-185 (IYLFIISCILALIAQSSDLFI), and 206-226 (GVLDRFDSIILTAPVFFGINI).

Belongs to the CDS family.

It localises to the cell membrane. The catalysed reaction is a 1,2-diacyl-sn-glycero-3-phosphate + CTP + H(+) = a CDP-1,2-diacyl-sn-glycerol + diphosphate. Its pathway is phospholipid metabolism; CDP-diacylglycerol biosynthesis; CDP-diacylglycerol from sn-glycerol 3-phosphate: step 3/3. This chain is Phosphatidate cytidylyltransferase (cdsA), found in Rickettsia typhi (strain ATCC VR-144 / Wilmington).